The following is an 88-amino-acid chain: Small ribosomal subunit protein eS21 (88 aa).

This sequence belongs to the eukaryotic ribosomal protein eS21 family. As to quaternary structure, component of the small ribosomal subunit. Mature ribosomes consist of a small (40S) and a large (60S) subunit. The 40S subunit contains about 33 different proteins and 1 molecule of RNA (18S). The 60S subunit contains about 49 different proteins and 3 molecules of RNA (25S, 5.8S and 5S).

It is found in the cytoplasm. Required for the processing of the 20S rRNA-precursor to mature 18S rRNA in a late step of the maturation of 40S ribosomal subunits. Has a physiological role leading to 18S rRNA stability. The chain is Small ribosomal subunit protein eS21 (rps21) from Aspergillus fumigatus (strain ATCC MYA-4609 / CBS 101355 / FGSC A1100 / Af293) (Neosartorya fumigata).